Consider the following 461-residue polypeptide: Homocitrate synthase (461 aa).

Positions 4–259 (VGILDSTLRE…IEVVKLDKLQ (256 aa)) constitute a Pyruvate carboxyltransferase domain. Position 12 (R12) interacts with 2-oxoglutarate. E13 is a binding site for Mg(2+). Residues H76, R136, and T170 each contribute to the 2-oxoglutarate site. The Mg(2+) site is built by H198 and H200. Catalysis depends on H292, which acts as the Proton acceptor.

It belongs to the alpha-IPM synthase/homocitrate synthase family. Homocitrate synthase LYS20/LYS21 subfamily. The cofactor is Mg(2+). Mn(2+) serves as cofactor.

The catalysed reaction is acetyl-CoA + 2-oxoglutarate + H2O = (2R)-homocitrate + CoA + H(+). Its pathway is amino-acid biosynthesis; L-lysine biosynthesis via AAA pathway; L-alpha-aminoadipate from 2-oxoglutarate: step 1/5. Functionally, catalyzes the aldol-type condensation of 2-oxoglutarate with acetyl-CoA to yield homocitrate. Carries out the first step of the alpha-aminoadipate (AAA) lysine biosynthesis pathway. This chain is Homocitrate synthase, found in Saccharolobus solfataricus (strain ATCC 35092 / DSM 1617 / JCM 11322 / P2) (Sulfolobus solfataricus).